The chain runs to 433 residues: Type I acyl-CoA thioesterase mpaH (433 aa).

Positions 58-246 (HGVGLPKELY…VKARFDAAAD (189 aa)) are abhydrolase domain. Residue valine 60 coordinates substrate. The Nucleophile role is filled by serine 139. Phenylalanine 140 contributes to the substrate binding site. Catalysis depends on residues aspartate 163 and histidine 365.

The protein belongs to the AB hydrolase superfamily. MpaH hydrolase family. As to quaternary structure, homodimer.

It is found in the peroxisome matrix. It carries out the reaction mycophenolyl-CoA + H2O = mycophenolate + CoA + H(+). Its pathway is secondary metabolite biosynthesis; terpenoid biosynthesis. Type I acyl-CoA thioesterase; part of the gene cluster that mediates the biosynthesis of mycophenolic acid (MPA), the first isolated antibiotic natural product in the world obtained from a culture of Penicillium brevicompactum in 1893. MpaH acts as a peroxisomal acyl-CoA hydrolase that converts MPA-CoA into the final product MPA. The first step of the pathway is the synthesis of 5-methylorsellinic acid (5MOA) by the cytosolic polyketide synthase mpaC. 5MOA is then converted to the phthalide compound 5,7-dihydroxy-4,6-dimethylphthalide (DHMP) by the endoplasmic reticulum-bound cytochrome P450 monooxygenase mpaDE. MpaDE first catalyzes hydroxylation of 5-MOA to 4,6-dihydroxy-2-(hydroxymethyl)-3-methylbenzoic acid (DHMB). MpaDE then acts as a lactone synthase that catalyzes the ring closure to convert DHMB into DHMP. The next step is the prenylation of DHMP by the Golgi apparatus-associated prenyltransferase mpaA to yield farnesyl-DHMP (FDHMP). The ER-bound oxygenase mpaB then mediates the oxidative cleavage the C19-C20 double bond in FDHMP to yield FDHMP-3C via a mycophenolic aldehyde intermediate. The O-methyltransferase mpaG catalyzes the methylation of FDHMP-3C to yield MFDHMP-3C. After the cytosolic methylation of FDHMP-3C, MFDHMP-3C enters into peroxisomes probably via free diffusion due to its low molecular weight. Upon a peroxisomal CoA ligation reaction, catalyzed by a beta-oxidation component enzyme acyl-CoA ligase ACL891, MFDHMP-3C-CoA would then be restricted to peroxisomes for the following beta-oxidation pathway steps. The peroxisomal beta-oxidation machinery than converts MFDHMP-3C-CoA into MPA_CoA, via a beta-oxidation chain-shortening process. Finally mpaH acts as a peroxisomal acyl-CoA hydrolase with high substrate specificity toward MPA-CoA to release the final product MPA. In Penicillium roqueforti (strain FM164), this protein is Type I acyl-CoA thioesterase mpaH.